Here is a 340-residue protein sequence, read N- to C-terminus: MRVYYDRDCDVNLIKDMKVAILGYGSQGHAHALNLRDSGAKNVVVALREGSASAAKAEGEGLKVMGIAEAAAWCDVIMFTMPDELQAETYKKYVHDNLKDGAAIAFAHGLNVHFGLIEPKPGVDVIMMAPKGPGHTVRGEYTKGGGVPCLVAVHQNASDRALEIGLSYCSAIGGGRSGIIETNFREECETDLFGEQAVLCGGLVELIRMGFETLVEAGYAPEMAYFECLHEVKLIVDLIYEGGIANMNYSISNTAEYGEYVSGPRILPYDETKARMKAVLRDIQTGAFVRDFMQENQAGQPYFKGTRRLNDEHQIEQVGETLRGMMPWISEGKMVDKAKN.

The KARI N-terminal Rossmann domain occupies 1–182 (MRVYYDRDCD…GGGRSGIIET (182 aa)). NADP(+) contacts are provided by residues 24–27 (YGSQ), Arg48, Ser51, Ser53, and 83–86 (DELQ). His108 is an active-site residue. An NADP(+)-binding site is contributed by Gly134. Residues 183-329 (NFREECETDL…ETLRGMMPWI (147 aa)) enclose the KARI C-terminal knotted domain. 4 residues coordinate Mg(2+): Asp191, Glu195, Glu227, and Glu231. Substrate is bound at residue Ser252.

The protein belongs to the ketol-acid reductoisomerase family. Requires Mg(2+) as cofactor.

It catalyses the reaction (2R)-2,3-dihydroxy-3-methylbutanoate + NADP(+) = (2S)-2-acetolactate + NADPH + H(+). It carries out the reaction (2R,3R)-2,3-dihydroxy-3-methylpentanoate + NADP(+) = (S)-2-ethyl-2-hydroxy-3-oxobutanoate + NADPH + H(+). It participates in amino-acid biosynthesis; L-isoleucine biosynthesis; L-isoleucine from 2-oxobutanoate: step 2/4. It functions in the pathway amino-acid biosynthesis; L-valine biosynthesis; L-valine from pyruvate: step 2/4. Functionally, involved in the biosynthesis of branched-chain amino acids (BCAA). Catalyzes an alkyl-migration followed by a ketol-acid reduction of (S)-2-acetolactate (S2AL) to yield (R)-2,3-dihydroxy-isovalerate. In the isomerase reaction, S2AL is rearranged via a Mg-dependent methyl migration to produce 3-hydroxy-3-methyl-2-ketobutyrate (HMKB). In the reductase reaction, this 2-ketoacid undergoes a metal-dependent reduction by NADPH to yield (R)-2,3-dihydroxy-isovalerate. The chain is Ketol-acid reductoisomerase (NADP(+)) from Jannaschia sp. (strain CCS1).